The sequence spans 353 residues: D-alanine--D-alanine ligase (353 aa).

Residues Lys-141–Asp-349 form the ATP-grasp domain. Glu-176–Glu-231 contributes to the ATP binding site. 3 residues coordinate Mg(2+): Asp-302, Glu-316, and Asn-318.

This sequence belongs to the D-alanine--D-alanine ligase family. Mg(2+) is required as a cofactor. Mn(2+) serves as cofactor.

It is found in the cytoplasm. It catalyses the reaction 2 D-alanine + ATP = D-alanyl-D-alanine + ADP + phosphate + H(+). It functions in the pathway cell wall biogenesis; peptidoglycan biosynthesis. In terms of biological role, cell wall formation. This Synechococcus sp. (strain WH7803) protein is D-alanine--D-alanine ligase.